The following is an 88-amino-acid chain: Putative membrane protein insertion efficiency factor (88 aa).

The tract at residues 64–88 is disordered; that stretch reads GVDPVPKKSSSKKTSSTTACGCGHS.

The protein belongs to the UPF0161 family.

The protein localises to the cell inner membrane. In terms of biological role, could be involved in insertion of integral membrane proteins into the membrane. The protein is Putative membrane protein insertion efficiency factor of Herminiimonas arsenicoxydans.